The primary structure comprises 213 residues: N-(5'-phosphoribosyl)anthranilate isomerase (213 aa).

The protein belongs to the TrpF family.

The catalysed reaction is N-(5-phospho-beta-D-ribosyl)anthranilate = 1-(2-carboxyphenylamino)-1-deoxy-D-ribulose 5-phosphate. Its pathway is amino-acid biosynthesis; L-tryptophan biosynthesis; L-tryptophan from chorismate: step 3/5. This is N-(5'-phosphoribosyl)anthranilate isomerase from Methanocella arvoryzae (strain DSM 22066 / NBRC 105507 / MRE50).